The sequence spans 260 residues: NAD-dependent protein deacetylase (260 aa).

One can recognise a Deacetylase sirtuin-type domain in the interval 9-260; sequence DDIDGETLDA…QVLPAIVERL (252 aa). Residues Ala-35, Thr-39, Phe-46, Arg-47, Gln-114, Ile-116, Asp-117, and His-132 each contribute to the NAD(+) site. Phe-46 serves as a coordination point for nicotinamide. Residues Ile-116 and Asp-117 each coordinate nicotinamide. Residue His-132 is the Proton acceptor of the active site. Positions 140, 143, 166, and 168 each coordinate Zn(2+). NAD(+) contacts are provided by Ser-206, Ser-207, Asn-231, Asp-248, and Val-249.

It belongs to the sirtuin family. Class U subfamily. The cofactor is Zn(2+).

The protein localises to the cytoplasm. The enzyme catalyses N(6)-acetyl-L-lysyl-[protein] + NAD(+) + H2O = 2''-O-acetyl-ADP-D-ribose + nicotinamide + L-lysyl-[protein]. NAD-dependent protein deacetylase which modulates the activities of several enzymes which are inactive in their acetylated form. Deacetylates the N-terminal lysine residue of Alba, the major archaeal chromatin protein and that, in turn, increases Alba's DNA binding affinity, thereby repressing transcription. The protein is NAD-dependent protein deacetylase of Haloarcula marismortui (strain ATCC 43049 / DSM 3752 / JCM 8966 / VKM B-1809) (Halobacterium marismortui).